The sequence spans 293 residues: Bifunctional protein FolD (293 aa).

Residues 164–166 (GRS), serine 193, and threonine 234 contribute to the NADP(+) site.

This sequence belongs to the tetrahydrofolate dehydrogenase/cyclohydrolase family. In terms of assembly, homodimer.

It carries out the reaction (6R)-5,10-methylene-5,6,7,8-tetrahydrofolate + NADP(+) = (6R)-5,10-methenyltetrahydrofolate + NADPH. It catalyses the reaction (6R)-5,10-methenyltetrahydrofolate + H2O = (6R)-10-formyltetrahydrofolate + H(+). It participates in one-carbon metabolism; tetrahydrofolate interconversion. Catalyzes the oxidation of 5,10-methylenetetrahydrofolate to 5,10-methenyltetrahydrofolate and then the hydrolysis of 5,10-methenyltetrahydrofolate to 10-formyltetrahydrofolate. The polypeptide is Bifunctional protein FolD (Bacteroides thetaiotaomicron (strain ATCC 29148 / DSM 2079 / JCM 5827 / CCUG 10774 / NCTC 10582 / VPI-5482 / E50)).